A 162-amino-acid polypeptide reads, in one-letter code: 2-C-methyl-D-erythritol 2,4-cyclodiphosphate synthase (162 aa).

D12 and H14 together coordinate a divalent metal cation. 4-CDP-2-C-methyl-D-erythritol 2-phosphate is bound by residues 12–14 (DVH) and 38–39 (HS). H46 provides a ligand contact to a divalent metal cation. Residues 60–62 (DIG), 65–69 (FPDTD), and R146 contribute to the 4-CDP-2-C-methyl-D-erythritol 2-phosphate site.

It belongs to the IspF family. Homotrimer. A divalent metal cation serves as cofactor.

The catalysed reaction is 4-CDP-2-C-methyl-D-erythritol 2-phosphate = 2-C-methyl-D-erythritol 2,4-cyclic diphosphate + CMP. It participates in isoprenoid biosynthesis; isopentenyl diphosphate biosynthesis via DXP pathway; isopentenyl diphosphate from 1-deoxy-D-xylulose 5-phosphate: step 4/6. Functionally, involved in the biosynthesis of isopentenyl diphosphate (IPP) and dimethylallyl diphosphate (DMAPP), two major building blocks of isoprenoid compounds. Catalyzes the conversion of 4-diphosphocytidyl-2-C-methyl-D-erythritol 2-phosphate (CDP-ME2P) to 2-C-methyl-D-erythritol 2,4-cyclodiphosphate (ME-CPP) with a corresponding release of cytidine 5-monophosphate (CMP). This Bordetella petrii (strain ATCC BAA-461 / DSM 12804 / CCUG 43448) protein is 2-C-methyl-D-erythritol 2,4-cyclodiphosphate synthase.